A 328-amino-acid polypeptide reads, in one-letter code: GMP reductase (328 aa).

Residue C176 is the Thioimidate intermediate of the active site. Residue 205–228 participates in NADP(+) binding; the sequence is IIADGGIRTHGDIAKSIRFGASMI.

The protein belongs to the IMPDH/GMPR family. GuaC type 2 subfamily.

The catalysed reaction is IMP + NH4(+) + NADP(+) = GMP + NADPH + 2 H(+). Its function is as follows. Catalyzes the irreversible NADPH-dependent deamination of GMP to IMP. It functions in the conversion of nucleobase, nucleoside and nucleotide derivatives of G to A nucleotides, and in maintaining the intracellular balance of A and G nucleotides. The chain is GMP reductase from Streptococcus pneumoniae serotype 4 (strain ATCC BAA-334 / TIGR4).